The following is a 140-amino-acid chain: Putative peptidyl-tRNA hydrolase PTRHD1 (140 aa).

This sequence belongs to the PTH2 family. PTRHD1 subfamily.

The enzyme catalyses an N-acyl-L-alpha-aminoacyl-tRNA + H2O = an N-acyl-L-amino acid + a tRNA + H(+). Functionally, as a putative peptidyl-tRNA hydrolase, it might be involved in releasing tRNAs from the ribosome during protein synthesis. Some evidence, however, suggests that it lacks peptidyl-tRNA hydrolase activity. This is Putative peptidyl-tRNA hydrolase PTRHD1 (PTRHD1) from Homo sapiens (Human).